Consider the following 370-residue polypeptide: Chorismate synthase (370 aa).

The segment at 41 to 60 (IQGDLDRRKPGTSRHVTQRK) is disordered. Residues arginine 48 and arginine 54 each coordinate NADP(+). Residues 125 to 127 (RSS), 238 to 239 (NA), glycine 278, 293 to 297 (KPTSS), and arginine 319 each bind FMN.

The protein belongs to the chorismate synthase family. As to quaternary structure, homotetramer. FMNH2 serves as cofactor.

The catalysed reaction is 5-O-(1-carboxyvinyl)-3-phosphoshikimate = chorismate + phosphate. Its pathway is metabolic intermediate biosynthesis; chorismate biosynthesis; chorismate from D-erythrose 4-phosphate and phosphoenolpyruvate: step 7/7. Functionally, catalyzes the anti-1,4-elimination of the C-3 phosphate and the C-6 proR hydrogen from 5-enolpyruvylshikimate-3-phosphate (EPSP) to yield chorismate, which is the branch point compound that serves as the starting substrate for the three terminal pathways of aromatic amino acid biosynthesis. This reaction introduces a second double bond into the aromatic ring system. This Cupriavidus pinatubonensis (strain JMP 134 / LMG 1197) (Cupriavidus necator (strain JMP 134)) protein is Chorismate synthase.